Reading from the N-terminus, the 415-residue chain is Imidazolonepropionase (415 aa).

Fe(3+) is bound by residues His74 and His76. His74 and His76 together coordinate Zn(2+). Residues Arg83, Tyr146, and His179 each contribute to the 4-imidazolone-5-propanoate site. Residue Tyr146 participates in N-formimidoyl-L-glutamate binding. His244 serves as a coordination point for Fe(3+). A Zn(2+)-binding site is contributed by His244. Residue Gln247 participates in 4-imidazolone-5-propanoate binding. Asp319 serves as a coordination point for Fe(3+). Asp319 is a Zn(2+) binding site. Asn321 and Gly323 together coordinate N-formimidoyl-L-glutamate. Position 324 (Thr324) interacts with 4-imidazolone-5-propanoate.

Belongs to the metallo-dependent hydrolases superfamily. HutI family. It depends on Zn(2+) as a cofactor. Fe(3+) serves as cofactor.

The protein resides in the cytoplasm. It carries out the reaction 4-imidazolone-5-propanoate + H2O = N-formimidoyl-L-glutamate. Its pathway is amino-acid degradation; L-histidine degradation into L-glutamate; N-formimidoyl-L-glutamate from L-histidine: step 3/3. Catalyzes the hydrolytic cleavage of the carbon-nitrogen bond in imidazolone-5-propanoate to yield N-formimidoyl-L-glutamate. It is the third step in the universal histidine degradation pathway. The sequence is that of Imidazolonepropionase from Cupriavidus metallidurans (strain ATCC 43123 / DSM 2839 / NBRC 102507 / CH34) (Ralstonia metallidurans).